Consider the following 581-residue polypeptide: Trehalase (581 aa).

Belongs to the glycosyl hydrolase 15 family. As to quaternary structure, monomer.

It carries out the reaction alpha,alpha-trehalose + H2O = alpha-D-glucose + beta-D-glucose. Its pathway is glycan degradation; trehalose degradation; D-glucose from alpha,alpha-trehalose: step 1/1. Inhibited by validamycin A. Functionally, catalyzes the hydrolysis of alpha,alpha-trehalose into two molecules of D-glucose. The sequence is that of Trehalase from Thermoplasma acidophilum (strain ATCC 25905 / DSM 1728 / JCM 9062 / NBRC 15155 / AMRC-C165).